A 579-amino-acid polypeptide reads, in one-letter code: uncharacterized protein (579 aa).

This is an uncharacterized protein from Klebsiella pneumoniae.